Here is a 307-residue protein sequence, read N- to C-terminus: Small ribosomal subunit biogenesis GTPase RsgA (307 aa).

The disordered stretch occupies residues 1-21; the sequence is MPSEHPFSDGISTPNPKETMN. Polar residues predominate over residues 10-21; that stretch reads GISTPNPKETMN. A CP-type G domain is found at 85–242; it reads RQDAWKTKLI…LIDSPGLQEF (158 aa). Residues 135–138 and 184–192 each bind GTP; these read NKAD and GQSGMGKST. The Zn(2+) site is built by Cys-266, Cys-271, His-273, and Cys-279.

Belongs to the TRAFAC class YlqF/YawG GTPase family. RsgA subfamily. As to quaternary structure, monomer. Associates with 30S ribosomal subunit, binds 16S rRNA. The cofactor is Zn(2+).

It is found in the cytoplasm. In terms of biological role, one of several proteins that assist in the late maturation steps of the functional core of the 30S ribosomal subunit. Helps release RbfA from mature subunits. May play a role in the assembly of ribosomal proteins into the subunit. Circularly permuted GTPase that catalyzes slow GTP hydrolysis, GTPase activity is stimulated by the 30S ribosomal subunit. In Neisseria gonorrhoeae (strain NCCP11945), this protein is Small ribosomal subunit biogenesis GTPase RsgA.